Here is a 96-residue protein sequence, read N- to C-terminus: Putative pterin-4-alpha-carbinolamine dehydratase (96 aa).

It belongs to the pterin-4-alpha-carbinolamine dehydratase family.

It catalyses the reaction (4aS,6R)-4a-hydroxy-L-erythro-5,6,7,8-tetrahydrobiopterin = (6R)-L-erythro-6,7-dihydrobiopterin + H2O. In Prochlorococcus marinus (strain MIT 9215), this protein is Putative pterin-4-alpha-carbinolamine dehydratase.